Consider the following 134-residue polypeptide: Profilin-3 (134 aa).

A disulfide bond links Cys13 and Cys118. The short motif at 84–100 (AVIRGKKGSGGITIKKT) is the Involved in PIP2 interaction element. Thr114 is subject to Phosphothreonine.

This sequence belongs to the profilin family. Occurs in many kinds of cells as a complex with monomeric actin in a 1:1 ratio. Post-translationally, phosphorylated by MAP kinases.

It is found in the cytoplasm. The protein resides in the cytoskeleton. Its function is as follows. Binds to actin and affects the structure of the cytoskeleton. At high concentrations, profilin prevents the polymerization of actin, whereas it enhances it at low concentrations. This Olea europaea (Common olive) protein is Profilin-3.